Here is a 73-residue protein sequence, read N- to C-terminus: Large ribosomal subunit protein bL31 (73 aa).

It belongs to the bacterial ribosomal protein bL31 family. Type A subfamily. In terms of assembly, part of the 50S ribosomal subunit.

Its function is as follows. Binds the 23S rRNA. This Ruegeria sp. (strain TM1040) (Silicibacter sp.) protein is Large ribosomal subunit protein bL31.